The following is a 313-amino-acid chain: LUC7-related splicing factor homolog (313 aa).

Residues 237–313 (RKEREEKLGS…RDRRDRDRRY (77 aa)) are disordered.

It belongs to the Luc7 family.

The protein is LUC7-related splicing factor homolog of Caenorhabditis elegans.